A 260-amino-acid polypeptide reads, in one-letter code: Cytosolic Fe-S cluster assembly factor Nubp2 homolog (260 aa).

Position 14 to 21 (14 to 21 (GKGGVGKS)) interacts with ATP. 2 residues coordinate [4Fe-4S] cluster: Cys-188 and Cys-191.

It belongs to the Mrp/NBP35 ATP-binding proteins family. NUBP2/CFD1 subfamily. Heterotetramer of 2 Nubp1 and 2 Nubp2 chains. [4Fe-4S] cluster serves as cofactor.

Its subcellular location is the cytoplasm. Component of the cytosolic iron-sulfur (Fe/S) protein assembly (CIA) machinery. Required for maturation of extramitochondrial Fe-S proteins. The Nubp1-Nubp2 heterotetramer forms a Fe-S scaffold complex, mediating the de novo assembly of an Fe-S cluster and its transfer to target apoproteins. This Drosophila erecta (Fruit fly) protein is Cytosolic Fe-S cluster assembly factor Nubp2 homolog.